The sequence spans 1770 residues: Transposon Ty2-LR1 Gag-Pol polyprotein (1770 aa).

Polar residues-rich tracts occupy residues 1–11, 19–39, and 49–60; these read MESQQLHQNPH, ASVTSKEVPSNQDPLAVSASN, and KVNSQQETTPGT. Disordered stretches follow at residues 1 to 86 and 359 to 453; these read MESQ…GQYQ and QHSE…LPDH. Residues 295-397 form an RNA-binding region; the sequence is ENNINVSDRL…SSKPRAAKAH (103 aa). Residues 369–381 show a composition bias toward low complexity; that stretch reads TSPNTTNTKVTTR. 2 stretches are compositionally biased toward polar residues: residues 399–408 and 415–435; these read IATSSKFSRV and ESTVSSQYLSDDNELSLGQQQ. Residue Asp457 is the For protease activity; shared with dimeric partner of the active site. Residues 579–636 are integrase-type zinc finger-like; sequence NVNKSKSVNKYPYPLIHRMLGHANFRSIQKSLKKNAVTYLKESDIEWSNASTYQCPDC. Residues 656–831 form the Integrase catalytic domain; that stretch reads ESYEPFQYLH…AGLDITTILP (176 aa). Positions 667 and 732 each coordinate Mg(2+). Disordered regions lie at residues 1005 to 1038, 1058 to 1135, 1146 to 1165, and 1170 to 1205; these read GGTIESDTTSPRHSSTFTARNQKRPGSPNDMIDL, GTEE…KSSK, LPLPDLTHKSPTDTSDVSKD, and HSRQTNSSLGGMDDSNVLTTTKSKKRSLEDNETEIE. Composition is skewed to polar residues over residues 1009–1024 and 1065–1082; these read ESDTTSPRHSSTFTAR and QRNSDTNIKYRTTNSTPS. The segment covering 1151–1165 has biased composition (basic and acidic residues); sequence LTHKSPTDTSDVSKD. Positions 1193-1227 match the Bipartite nuclear localization signal motif; the sequence is KKRSLEDNETEIEVSRDTWNNKNMRSLEPPRSKKR. The Reverse transcriptase Ty1/copia-type domain occupies 1353-1491; the sequence is NDYYITQLDI…DILGLEIKYQ (139 aa). The Mg(2+) site is built by Asp1361, Asp1442, Asp1443, Asp1625, Glu1667, and Asp1700. Positions 1625–1767 constitute an RNase H Ty1/copia-type domain; the sequence is DASYGNQPYY…IKTFKLLTNK (143 aa).

In terms of assembly, the capsid protein forms a homotrimer, from which the VLPs are assembled. The protease is a homodimer, whose active site consists of two apposed aspartic acid residues. Initially, virus-like particles (VLPs) are composed of the structural unprocessed proteins Gag and Gag-Pol, and also contain the host initiator methionine tRNA (tRNA(i)-Met) which serves as a primer for minus-strand DNA synthesis, and a dimer of genomic Ty RNA. Processing of the polyproteins occurs within the particle and proceeds by an ordered pathway, called maturation. First, the protease (PR) is released by autocatalytic cleavage of the Gag-Pol polyprotein, and this cleavage is a prerequisite for subsequent processing at the remaining sites to release the mature structural and catalytic proteins. Maturation takes place prior to the RT reaction and is required to produce transposition-competent VLPs.

The protein localises to the cytoplasm. Its subcellular location is the nucleus. The catalysed reaction is DNA(n) + a 2'-deoxyribonucleoside 5'-triphosphate = DNA(n+1) + diphosphate. It catalyses the reaction Endonucleolytic cleavage to 5'-phosphomonoester.. Functionally, capsid protein (CA) is the structural component of the virus-like particle (VLP), forming the shell that encapsulates the retrotransposons dimeric RNA genome. The particles are assembled from trimer-clustered units and there are holes in the capsid shells that allow for the diffusion of macromolecules. CA also has nucleocapsid-like chaperone activity, promoting primer tRNA(i)-Met annealing to the multipartite primer-binding site (PBS), dimerization of Ty2 RNA and initiation of reverse transcription. The aspartyl protease (PR) mediates the proteolytic cleavages of the Gag and Gag-Pol polyproteins after assembly of the VLP. Its function is as follows. Reverse transcriptase/ribonuclease H (RT) is a multifunctional enzyme that catalyzes the conversion of the retro-elements RNA genome into dsDNA within the VLP. The enzyme displays a DNA polymerase activity that can copy either DNA or RNA templates, and a ribonuclease H (RNase H) activity that cleaves the RNA strand of RNA-DNA heteroduplexes during plus-strand synthesis and hydrolyzes RNA primers. The conversion leads to a linear dsDNA copy of the retrotransposon that includes long terminal repeats (LTRs) at both ends. In terms of biological role, integrase (IN) targets the VLP to the nucleus, where a subparticle preintegration complex (PIC) containing at least integrase and the newly synthesized dsDNA copy of the retrotransposon must transit the nuclear membrane. Once in the nucleus, integrase performs the integration of the dsDNA into the host genome. This is Transposon Ty2-LR1 Gag-Pol polyprotein (TY2B-LR1) from Saccharomyces cerevisiae (strain ATCC 204508 / S288c) (Baker's yeast).